Consider the following 207-residue polypeptide: Segregation and condensation protein B (207 aa).

Residues 173 to 207 (DDTAESDNDSADLYYRQFEQTLNETGPETAPKGEQ) are disordered.

Belongs to the ScpB family. In terms of assembly, homodimer. Homodimerization may be required to stabilize the binding of ScpA to the Smc head domains. Component of a cohesin-like complex composed of ScpA, ScpB and the Smc homodimer, in which ScpA and ScpB bind to the head domain of Smc. The presence of the three proteins is required for the association of the complex with DNA.

The protein resides in the cytoplasm. In terms of biological role, participates in chromosomal partition during cell division. May act via the formation of a condensin-like complex containing Smc and ScpA that pull DNA away from mid-cell into both cell halves. The protein is Segregation and condensation protein B of Latilactobacillus sakei subsp. sakei (strain 23K) (Lactobacillus sakei subsp. sakei).